We begin with the raw amino-acid sequence, 1233 residues long: Structural maintenance of chromosomes protein 1A (1233 aa).

32 to 39 is an ATP binding site; it reads GPNGSGKS. 2 coiled-coil regions span residues 104 to 124 and 163 to 503; these read EYKI…LEKL and ELAQ…KAEI. Positions 284 to 293 are enriched in basic and acidic residues; that stretch reads IKEKDSELNQ. Disordered regions lie at residues 284–308 and 348–369; these read IKEK…TSHK and QEFE…TLEE. 2 positions are modified to phosphoserine: Ser-358 and Ser-360. Positions 515–629 constitute an SMC hinge domain; that stretch reads VYGRLIDLCQ…DNVEDARRIA (115 aa). 2 positions are modified to N6-acetyllysine: Lys-648 and Lys-713. Residues 660–935 are a coiled coil; that stretch reads KAKARRWDEK…RHNLLQACKM (276 aa). The interval 947–968 is disordered; sequence MDDISQEEGSSQGEDSVSGSQR. A compositionally biased stretch (low complexity) spans 953–967; sequence EEGSSQGEDSVSGSQ. Ser-957, Ser-962, Ser-966, and Ser-970 each carry phosphoserine. Positions 991–1068 form a coiled coil; it reads KDAQAEEEIK…FEQIKKERFD (78 aa). Residue Lys-1037 is modified to N6-acetyllysine.

It belongs to the SMC family. SMC1 subfamily. In terms of assembly, forms a heterodimer with SMC3 in cohesin complexes. Cohesin complexes are composed of the SMC1 (SMC1A or meiosis-specific SMC1B) and SMC3 heterodimer attached via their SMC hinge domain, RAD21 which link them, and one STAG protein (STAG1, STAG2 or meiosis-specific STAG3), which interacts with RAD21. In germ cell cohesin complexes, SMC1A is mutually exclusive with SMC1B. Found in a complex with CDCA5, SMC3 and RAD21, PDS5A/SCC-112 and PDS5B/APRIN. Interacts with NDC80, SYCP2, STAG3, BRCA1 and BRAT1. The cohesin complex interacts with the cohesin loading complex subunits NIPBL/Scc2 (via HEAT repeats) and MAU2/Scc4. NIPBL directly contacts all members of the complex, RAD21, SMC1A/B, SMC3 and STAG1. Interacts with RPGR. Found in a complex containing POLE and SMC3. Phosphorylated upon ionizing radiation or DNA methylation. Phosphorylation of Ser-957 and Ser-966 activates it and is required for S-phase checkpoint activation. Post-translationally, ubiquitinated by the DCX(DCAF15) complex, leading to its degradation.

The protein localises to the nucleus. The protein resides in the chromosome. It is found in the centromere. In terms of biological role, involved in chromosome cohesion during cell cycle and in DNA repair. Involved in DNA repair via its interaction with BRCA1 and its related phosphorylation by ATM, and works as a downstream effector in the ATM/NBS1 branch of S-phase checkpoint. Central component of cohesin complex. The cohesin complex is required for the cohesion of sister chromatids after DNA replication. The cohesin complex apparently forms a large proteinaceous ring within which sister chromatids can be trapped. At anaphase, the complex is cleaved and dissociates from chromatin, allowing sister chromatids to segregate. The cohesin complex may also play a role in spindle pole assembly during mitosis. Involved in DNA repair via its interaction with BRCA1 and its related phosphorylation by ATM, or via its phosphorylation by ATR. Works as a downstream effector both in the ATM/NBS1 branch and in the ATR/MSH2 branch of S-phase checkpoint. In Bos taurus (Bovine), this protein is Structural maintenance of chromosomes protein 1A (SMC1A).